The sequence spans 147 residues: Protein-export protein SecB 2 (147 aa).

Belongs to the SecB family. In terms of assembly, homotetramer, a dimer of dimers. One homotetramer interacts with 1 SecA dimer.

It is found in the cytoplasm. Its function is as follows. One of the proteins required for the normal export of preproteins out of the cell cytoplasm. It is a molecular chaperone that binds to a subset of precursor proteins, maintaining them in a translocation-competent state. It also specifically binds to its receptor SecA. This chain is Protein-export protein SecB 2, found in Francisella tularensis subsp. novicida (strain U112).